A 599-amino-acid polypeptide reads, in one-letter code: Riboflavin biosynthesis protein PYRR, chloroplastic (599 aa).

Residues 1-17 constitute a chloroplast transit peptide; it reads MALSFRISSSSPLICRA. In terms of domain architecture, CMP/dCMP-type deaminase spans 30-152; sequence TTDAAFIRRA…ELRSHGIEVN (123 aa).

In the C-terminal section; belongs to the YbiA family.

It is found in the plastid. The protein localises to the chloroplast. The catalysed reaction is 5-amino-6-(5-phospho-D-ribitylamino)uracil + NADP(+) = 5-amino-6-(5-phospho-D-ribosylamino)uracil + NADPH + H(+). The enzyme catalyses 2,5-diamino-6-hydroxy-4-(5-phosphoribosylamino)-pyrimidine + H2O = 2,5,6-triamino-4-hydroxypyrimidine + D-ribose 5-phosphate. It carries out the reaction 5-amino-6-(5-phospho-D-ribosylamino)uracil + H2O = 5,6-diaminouracil + D-ribose 5-phosphate. It functions in the pathway cofactor biosynthesis; riboflavin biosynthesis; 5-amino-6-(D-ribitylamino)uracil from GTP: step 3/4. Its function is as follows. Pyrimidine reductase involved in the riboflavin biosynthesis pathway. Also has a non-functional N-terminal deaminase domain that lacks the catalytically essential zinc-binding residues. Functionally, catalyzes the hydrolysis of the N-glycosidic bond in the first two intermediates of riboflavin biosynthesis, which are highly reactive metabolites, yielding relatively innocuous products. Thus, can divert a surplus of harmful intermediates into relatively harmless products and pre-empt the damage these intermediates would otherwise do. Helps maintain flavin levels. Has no activity against GTP, nucleoside monophosphates or ADP-ribose. This chain is Riboflavin biosynthesis protein PYRR, chloroplastic (PYRR), found in Arabidopsis thaliana (Mouse-ear cress).